The chain runs to 202 residues: Orotate phosphoribosyltransferase (202 aa).

5-phospho-alpha-D-ribose 1-diphosphate is bound by residues Lys-93 and 113–121 (EDIITTGGS). Residues Thr-117 and Arg-145 each contribute to the orotate site.

Belongs to the purine/pyrimidine phosphoribosyltransferase family. PyrE subfamily. In terms of assembly, homodimer. Mg(2+) is required as a cofactor.

The enzyme catalyses orotidine 5'-phosphate + diphosphate = orotate + 5-phospho-alpha-D-ribose 1-diphosphate. It participates in pyrimidine metabolism; UMP biosynthesis via de novo pathway; UMP from orotate: step 1/2. In terms of biological role, catalyzes the transfer of a ribosyl phosphate group from 5-phosphoribose 1-diphosphate to orotate, leading to the formation of orotidine monophosphate (OMP). This is Orotate phosphoribosyltransferase from Campylobacter jejuni subsp. doylei (strain ATCC BAA-1458 / RM4099 / 269.97).